A 192-amino-acid chain; its full sequence is Putative integrase/recombinase y4gC (192 aa).

The Tyr recombinase domain occupies 1-183 (MPSILERDQI…ATEDLRAIAL (183 aa)). Catalysis depends on residues Arg-41, Lys-66, His-135, Arg-138, and His-161. Residue Tyr-170 is the O-(3'-phospho-DNA)-tyrosine intermediate of the active site.

Belongs to the 'phage' integrase family.

This chain is Putative integrase/recombinase y4gC, found in Sinorhizobium fredii (strain NBRC 101917 / NGR234).